A 266-amino-acid polypeptide reads, in one-letter code: UPF0354 protein lmo1608 (266 aa).

This sequence belongs to the UPF0354 family.

The protein is UPF0354 protein lmo1608 of Listeria monocytogenes serovar 1/2a (strain ATCC BAA-679 / EGD-e).